The sequence spans 90 residues: Defensin-like protein 293 (90 aa).

Residues 1-26 form the signal peptide; it reads MTSRAKSLFIFFFLISCTFMLLETDA. 3 disulfide bridges follow: Cys63–Cys83, Cys69–Cys88, and Cys75–Cys90.

The protein belongs to the DEFL family.

The protein resides in the secreted. This chain is Defensin-like protein 293, found in Arabidopsis thaliana (Mouse-ear cress).